The primary structure comprises 36 residues: Photosystem II reaction center protein Y (36 aa).

Over 1-4 (MDTR) the chain is Lumenal. A helical transmembrane segment spans residues 5 to 23 (LIVIAAPVLVAASWALFNI). Topologically, residues 24-36 (GRLAIQQIQRLKR) are stromal.

Belongs to the PsbY family. PSII is composed of 1 copy each of membrane proteins PsbA, PsbB, PsbC, PsbD, PsbE, PsbF, PsbH, PsbI, PsbJ, PsbK, PsbL, PsbM, PsbT, PsbX, PsbY, PsbZ, Psb30/Ycf12, at least 3 peripheral proteins of the oxygen-evolving complex and a large number of cofactors. It forms dimeric complexes.

The protein localises to the plastid. Its subcellular location is the chloroplast thylakoid membrane. Its function is as follows. Loosely associated component of the core of photosystem II (PSII), it is not always seen in crystals. PSII is a light-driven water plastoquinone oxidoreductase, using light energy to abstract electrons from H(2)O, generating a proton gradient subsequently used for ATP formation. In Phaeodactylum tricornutum (strain CCAP 1055/1), this protein is Photosystem II reaction center protein Y.